The chain runs to 484 residues: MSFQQSETVPVPAQSSLSFTQGFLLGQLSVVLLIGAFIKFFIFGEAPPPPSRGLSHRASTHRRSNSIYTINHNEANNRSLREKPSNSNVLRPVPSSSTNTRSILRKTYYSAIPTNPSKHGRHKIHHSSHQPESLDWFNVLIAQTIAQYRQTAYLLKDSPTSSILSSLNAALNNPEKKPSFIDKINVTDISLGEEFPIFSNCRIIAVDDPNSDGGRLQALMDVDLSDDNLSIAIETSLLLNYPKPCSAILPVALSVSVVRFSGTLCISLVPASTPPLHTPSPSPSPPTADGNSRGKTTGDANARAADEEADGLPPKTGSPKSNVAFSFLPDYRLDLSVRSLIGSRSRLQDVPKVAQLVEARVHAWFEERVVEPRVQVVGLPDLWPRMGRTGVRTGDDSETGSNAASRSAMSADLGDHHLGDREPEGLRFRGGLASRPQFDSVSRTSSYNVETGDLRSPSLIREESSGALSEQFQMPGSLSGAAAR.

The Lumenal portion of the chain corresponds to 1-22 (MSFQQSETVPVPAQSSLSFTQG). A helical membrane pass occupies residues 23–43 (FLLGQLSVVLLIGAFIKFFIF). The Cytoplasmic portion of the chain corresponds to 44-484 (GEAPPPPSRG…PGSLSGAAAR (441 aa)). Disordered stretches follow at residues 50-98 (PSRG…SSST), 272-319 (STPP…TGSP), and 388-484 (RTGV…AAAR). A compositionally biased stretch (basic residues) spans 54-64 (LSHRASTHRRS). Composition is skewed to polar residues over residues 65 to 78 (NSIYTINHNEANNR) and 85 to 98 (SNSNVLRPVPSSST). Residues 130–380 (QPESLDWFNV…EPRVQVVGLP (251 aa)) form the SMP-LTD domain. The span at 272-286 (STPPLHTPSPSPSPP) shows a compositional bias: pro residues. The span at 399 to 408 (TGSNAASRSA) shows a compositional bias: polar residues. The segment covering 413 to 427 (LGDHHLGDREPEGLR) has biased composition (basic and acidic residues). Polar residues-rich tracts occupy residues 437-449 (QFDSVSRTSSYNV) and 466-476 (GALSEQFQMPG).

This sequence belongs to the MMM1 family. Homodimer. Component of the ER-mitochondria encounter structure (ERMES) or MDM complex, composed of mmm1, mdm10, mdm12 and mdm34. A mmm1 homodimer associates with one molecule of mdm12 on each side in a pairwise head-to-tail manner, and the SMP-LTD domains of mmm1 and mdm12 generate a continuous hydrophobic tunnel for phospholipid trafficking.

Its subcellular location is the endoplasmic reticulum membrane. In terms of biological role, component of the ERMES/MDM complex, which serves as a molecular tether to connect the endoplasmic reticulum (ER) and mitochondria. Components of this complex are involved in the control of mitochondrial shape and protein biogenesis, and function in nonvesicular lipid trafficking between the ER and mitochondria. The mdm12-mmm1 subcomplex functions in the major beta-barrel assembly pathway that is responsible for biogenesis of all outer membrane beta-barrel proteins, and acts in a late step after the SAM complex. The mdm10-mdm12-mmm1 subcomplex further acts in the TOM40-specific pathway after the action of the mdm12-mmm1 complex. Essential for establishing and maintaining the structure of mitochondria and maintenance of mtDNA nucleoids. The protein is Maintenance of mitochondrial morphology protein 1 of Aspergillus niger (strain ATCC MYA-4892 / CBS 513.88 / FGSC A1513).